Reading from the N-terminus, the 164-residue chain is Putative pre-16S rRNA nuclease (164 aa).

Belongs to the YqgF nuclease family.

It is found in the cytoplasm. Could be a nuclease involved in processing of the 5'-end of pre-16S rRNA. The sequence is that of Putative pre-16S rRNA nuclease from Synechococcus sp. (strain CC9902).